The following is a 302-amino-acid chain: Riboflavin transporter (302 aa).

The next 8 helical transmembrane spans lie at 16–36 (AVVGALWMVLAGIAFSLLNVV), 44–64 (LAFPSASAAFWQYGFAFLFSL), 87–107 (VVLAALGVEAWVAGLAAVPIW), 109–129 (AIALVMTSPFFIILGARLFLG), 158–178 (IGWAALLPVLSALLWGASSLI), 191–213 (ITVWLLVLLTPINGGLALAAGFA), 227–247 (GLLTAVAQYFLTLAYAAADAA), and 264–284 (GWLFFGYAPAGYLWLGAALIL). EamA domains follow at residues 30–151 (FSLL…MIIL) and 170–291 (LLWG…LFIM).

Belongs to the drug/metabolite transporter (DMT) superfamily. 10 TMS drug/metabolite exporter (DME) (TC 2.A.7.3) family.

Its subcellular location is the cell membrane. Its function is as follows. Transports riboflavin into the cell. Can also transport FMN and FAD. Required for normal nodule development during colonization of pea plant roots. In Rhizobium johnstonii (strain DSM 114642 / LMG 32736 / 3841) (Rhizobium leguminosarum bv. viciae), this protein is Riboflavin transporter.